A 267-amino-acid chain; its full sequence is MNRITETFARLRSSGRIALMPYLTVGFPERESTLELVPALEAAGASLFELGIPFSDPLADGATIQRATQRALENGVTIADCITTVAQLRARNVKAPLLLMGYYNPLLRYGLERACAELAAAGGDGWIIPDLPLEEAAELRPIAAAHHLDLIMFIAPTTPPTRITQIVAHASGFLYIVSLTGVTGARQTLAANLADLITTVRQQTDLPLVVGFGISQPSHVAEVARLADGAIVGSALIDRLERLAPSERVSGATAYIRELVSATERVH.

Catalysis depends on proton acceptor residues Glu49 and Asp60.

This sequence belongs to the TrpA family. Tetramer of two alpha and two beta chains.

It carries out the reaction (1S,2R)-1-C-(indol-3-yl)glycerol 3-phosphate + L-serine = D-glyceraldehyde 3-phosphate + L-tryptophan + H2O. The protein operates within amino-acid biosynthesis; L-tryptophan biosynthesis; L-tryptophan from chorismate: step 5/5. Its function is as follows. The alpha subunit is responsible for the aldol cleavage of indoleglycerol phosphate to indole and glyceraldehyde 3-phosphate. The sequence is that of Tryptophan synthase alpha chain from Chloroflexus aggregans (strain MD-66 / DSM 9485).